A 320-amino-acid chain; its full sequence is 1-aminocyclopropane-1-carboxylate oxidase 3 (320 aa).

The 101-residue stretch at 154 to 254 (PNFGTKVSNY…RMSIASFYNP (101 aa)) folds into the Fe2OG dioxygenase domain. His-178, Asp-180, and His-235 together coordinate Fe cation.

It belongs to the iron/ascorbate-dependent oxidoreductase family. The cofactor is Fe cation. Flowers.

The enzyme catalyses 1-aminocyclopropane-1-carboxylate + L-ascorbate + O2 = ethene + L-dehydroascorbate + hydrogen cyanide + CO2 + 2 H2O. It functions in the pathway alkene biosynthesis; ethylene biosynthesis via S-adenosyl-L-methionine; ethylene from S-adenosyl-L-methionine: step 2/2. This Cucumis melo (Muskmelon) protein is 1-aminocyclopropane-1-carboxylate oxidase 3 (ACO3).